The chain runs to 965 residues: Meiosis-specific coiled-coil domain-containing protein MEIOC (965 aa).

2 disordered regions span residues 1–22 (MEVSGGDTCRPRHPQGLREGPE) and 946–965 (VHESINSSNPMNQRGETSKH). A compositionally biased stretch (polar residues) spans 949-965 (SINSSNPMNQRGETSKH).

In terms of assembly, interacts with YTHDC2; binds transcripts that regulate the mitotic cell cycle inhibiting progression into metaphase, thereby allowing meiotic prophase to proceed normally. Interacts with RBM46. As to expression, expressed specifically in fetal ovary and postnatal and adult testes (at protein level). In adult testis expressed in spermatocytes, beginning in preleptotene and extending through most stages of meiotic prophase I, including leptotene, zygotene, and pachytene.

Its subcellular location is the cytoplasm. The protein localises to the nucleus. In terms of biological role, is required for meiosis completion in both male and female germ cells. Confers stability to numerous meiotic mRNAs in gonads allowing proper initiation and progression into meiosis prophase I. The function may involve YTHDC2 and is independent of induction by retinoic acid (RA). Maintains an extended meiotic prophase I by properly promoting the transition from a mitotic to a meiotic cell cycle program by binding transcripts through its interaction with YTHDC2 that regulate the mitotic cell cycle. This is Meiosis-specific coiled-coil domain-containing protein MEIOC from Mus musculus (Mouse).